A 642-amino-acid polypeptide reads, in one-letter code: Arginine--tRNA ligase (642 aa).

The short motif at Val133–His143 is the 'HIGH' region element.

This sequence belongs to the class-I aminoacyl-tRNA synthetase family.

Its subcellular location is the cytoplasm. It carries out the reaction tRNA(Arg) + L-arginine + ATP = L-arginyl-tRNA(Arg) + AMP + diphosphate. The protein is Arginine--tRNA ligase of Thermococcus kodakarensis (strain ATCC BAA-918 / JCM 12380 / KOD1) (Pyrococcus kodakaraensis (strain KOD1)).